A 186-amino-acid chain; its full sequence is Fucolectin-6 (186 aa).

Residues 1-32 (MKTCNLTDRMKVKMIMLLFQILAISTLQSVSA) form the signal peptide. Residues 40–186 (QENVAVRGKA…VEVNAMLPAN (147 aa)) are F5/8 type C-like. Ca(2+) contacts are provided by Asn67, Asp70, Asn72, and Ser81. 3 cysteine pairs are disulfide-bonded: Cys82/Cys175, Cys114/Cys115, and Cys137/Cys153. His84 and Arg111 together coordinate alpha-L-fucose. Residues 111 to 113 (RGD) carry the Cell attachment site motif. Residue Arg118 coordinates alpha-L-fucose. Positions 175 and 176 each coordinate Ca(2+).

This sequence belongs to the fucolectin family. As to quaternary structure, homotrimer. In terms of tissue distribution, gill mucous cells.

It localises to the secreted. Acts as a defensive agent. Recognizes blood group fucosylated oligosaccharides including A, B, H and Lewis B-type antigens. Does not recognize Lewis A antigen and has low affinity for monovalent haptens. In Anguilla japonica (Japanese eel), this protein is Fucolectin-6.